A 138-amino-acid polypeptide reads, in one-letter code: ATP synthase epsilon chain (138 aa).

Belongs to the ATPase epsilon chain family. In terms of assembly, F-type ATPases have 2 components, CF(1) - the catalytic core - and CF(0) - the membrane proton channel. CF(1) has five subunits: alpha(3), beta(3), gamma(1), delta(1), epsilon(1). CF(0) has three main subunits: a, b and c.

It localises to the cell membrane. Functionally, produces ATP from ADP in the presence of a proton gradient across the membrane. The chain is ATP synthase epsilon chain from Streptococcus pyogenes serotype M2 (strain MGAS10270).